We begin with the raw amino-acid sequence, 340 residues long: Deubiquitinase SseL (340 aa).

H223 is a catalytic residue. The active-site Nucleophile is C285.

It belongs to the peptidase C79 family.

It is found in the secreted. The protein localises to the host cytoplasm. In terms of biological role, effector proteins function to alter host cell physiology and promote bacterial survival in host tissues. This protease targets the host cell ubiquitin pathway by acting as a deubiquitinase in infected host cells. The chain is Deubiquitinase SseL (sseL) from Salmonella choleraesuis (strain SC-B67).